The sequence spans 822 residues: MLNISTNMMINQTLNFDSNQESQKNKTERISKTKLTRELITKTDHDIYVDDISFLQREDNVNVSQIDLTARGVLNPEDQGVLHKSTEFGVFNKNKTGLPASVDLKIKQNSFFSVKQPDFNKYLISDFVEIQRNSFFTLLEKGIIEEFSKRNPITNSKKTMEIFFYPDYYQLTPPEYSPSQAIIKSKSYTSKLYIPVQLTDKSKNIIKLKWVYIGDIPLMTKRGHFILNGCARVIVNQMVRSPGIYYQKKIYENFSNKWSEKPENTFTRYFADLICNRGTWLRIEMDKYNKIWAQMKRVPKIPIMWFLIAVGLTDKIVLKTVMDSKILLYNLDEDPLNPRKKPLPYVKTPPAAWSAIYNIVFAKKIKAQEKAKKMLELTEGNPSSKSQTKNKTSASKKSKTLNVANTKGKTPAENIKTLSELIDLEKALFLKSEQGRKWIFNKFMNPRTYDLGKVGRVNFNRKLKLSISQDITTLTPQDLLAATNNLILVSKGLRELDDIDHLKNRRVRTSGELIQIQIGVGLVRLEKTIREKMTYASGLSSLPSQKFAFRSSKQRNQSPVGDAENATQLTIGNLINTKPFNGALREFFGTSPLSQFMDQINPLAELTHKRRLSSMGPGGVTRDSATLAIRGIHPSHYGRICPVETPEGKNTGLVNSLTAYARVNAAGYIETPFYRVYKGQVQKKTGLYFFSAKQEEKIKLGAPDLYTSEIGFLPKASIPVRIVEDFTKISRNEIQYVGVAPIQMISIATSLIPFFEHDDANRALMGSNMQRQAVPILKPQRPIVGTGLEARAVSDSGHVITAKSSGIVMYTSSKEIIIYSLQ.

The tract at residues 376–408 is disordered; sequence ELTEGNPSSKSQTKNKTSASKKSKTLNVANTKG. A compositionally biased stretch (low complexity) spans 383 to 393; that stretch reads SSKSQTKNKTS.

The protein belongs to the RNA polymerase beta chain family. In terms of assembly, in plastids the minimal PEP RNA polymerase catalytic core is composed of four subunits: alpha, beta, beta', and beta''. When a (nuclear-encoded) sigma factor is associated with the core the holoenzyme is formed, which can initiate transcription.

The protein localises to the plastid. It localises to the chloroplast. The enzyme catalyses RNA(n) + a ribonucleoside 5'-triphosphate = RNA(n+1) + diphosphate. DNA-dependent RNA polymerase catalyzes the transcription of DNA into RNA using the four ribonucleoside triphosphates as substrates. The protein is DNA-directed RNA polymerase subunit beta N-terminal section (rpoB1) of Chlamydomonas reinhardtii (Chlamydomonas smithii).